A 336-amino-acid chain; its full sequence is Ketol-acid reductoisomerase (NADP(+)) (336 aa).

A KARI N-terminal Rossmann domain is found at 1 to 181; the sequence is MNVYYDKDCN…GGGRTGIIET (181 aa). NADP(+) is bound by residues 24 to 27, R47, S50, S52, and 82 to 85; these read YGSQ and DEFQ. Residue H107 is part of the active site. Residue G133 participates in NADP(+) binding. The KARI C-terminal knotted domain maps to 182 to 327; that stretch reads TFQDETETDL…GKLRSMMPWI (146 aa). Residues D190, E194, E226, and E230 each coordinate Mg(2+). S251 is a binding site for substrate.

This sequence belongs to the ketol-acid reductoisomerase family. Mg(2+) is required as a cofactor.

The enzyme catalyses (2R)-2,3-dihydroxy-3-methylbutanoate + NADP(+) = (2S)-2-acetolactate + NADPH + H(+). The catalysed reaction is (2R,3R)-2,3-dihydroxy-3-methylpentanoate + NADP(+) = (S)-2-ethyl-2-hydroxy-3-oxobutanoate + NADPH + H(+). It participates in amino-acid biosynthesis; L-isoleucine biosynthesis; L-isoleucine from 2-oxobutanoate: step 2/4. It functions in the pathway amino-acid biosynthesis; L-valine biosynthesis; L-valine from pyruvate: step 2/4. Its function is as follows. Involved in the biosynthesis of branched-chain amino acids (BCAA). Catalyzes an alkyl-migration followed by a ketol-acid reduction of (S)-2-acetolactate (S2AL) to yield (R)-2,3-dihydroxy-isovalerate. In the isomerase reaction, S2AL is rearranged via a Mg-dependent methyl migration to produce 3-hydroxy-3-methyl-2-ketobutyrate (HMKB). In the reductase reaction, this 2-ketoacid undergoes a metal-dependent reduction by NADPH to yield (R)-2,3-dihydroxy-isovalerate. The protein is Ketol-acid reductoisomerase (NADP(+)) of Geotalea daltonii (strain DSM 22248 / JCM 15807 / FRC-32) (Geobacter daltonii).